The following is a 364-amino-acid chain: DNA replication and repair protein RecF (364 aa).

Residue 30-37 (GENGSGKT) participates in ATP binding.

Belongs to the RecF family.

The protein localises to the cytoplasm. Its function is as follows. The RecF protein is involved in DNA metabolism; it is required for DNA replication and normal SOS inducibility. RecF binds preferentially to single-stranded, linear DNA. It also seems to bind ATP. The chain is DNA replication and repair protein RecF from Pseudoalteromonas translucida (strain TAC 125).